Consider the following 107-residue polypeptide: Translation initiation factor IF-1, chloroplastic (107 aa).

The region spanning 8 to 83 is the S1-like domain; it reads REKKNPREAK…SKGRIIYRLP (76 aa). The tract at residues 81 to 107 is disordered; the sequence is RLPHKDSKRTEDSKDTEDLKDTKDSKG. Basic and acidic residues predominate over residues 83–107; sequence PHKDSKRTEDSKDTEDLKDTKDSKG.

Belongs to the IF-1 family. Component of the 30S ribosomal translation pre-initiation complex which assembles on the 30S ribosome in the order IF-2 and IF-3, IF-1 and N-formylmethionyl-tRNA(fMet); mRNA recruitment can occur at any time during PIC assembly.

It is found in the plastid. Its subcellular location is the chloroplast. One of the essential components for the initiation of protein synthesis. Stabilizes the binding of IF-2 and IF-3 on the 30S subunit to which N-formylmethionyl-tRNA(fMet) subsequently binds. Helps modulate mRNA selection, yielding the 30S pre-initiation complex (PIC). Upon addition of the 50S ribosomal subunit IF-1, IF-2 and IF-3 are released leaving the mature 70S translation initiation complex. The protein is Translation initiation factor IF-1, chloroplastic of Oryza sativa subsp. indica (Rice).